Consider the following 187-residue polypeptide: UPF0301 protein Sbal195_3177 (187 aa).

This sequence belongs to the UPF0301 (AlgH) family.

The sequence is that of UPF0301 protein Sbal195_3177 from Shewanella baltica (strain OS195).